We begin with the raw amino-acid sequence, 865 residues long: Bifunctional uridylyltransferase/uridylyl-removing enzyme (865 aa).

The uridylyltransferase stretch occupies residues 1–318 (MPHVDLNPLK…FPRPDSDARL (318 aa)). A uridylyl-removing region spans residues 319–675 (IDDDFRNLRE…VRPTEHGEGL (357 aa)). The region spanning 437–559 (VDQHTLAVVR…VGDERRLAAL (123 aa)) is the HD domain. 2 ACT domains span residues 676–762 (QVMV…RLPH) and 789–865 (RLSV…QQAA). The segment at 747–767 (DPHAARHAHAPRRLPHSHARR) is disordered. Residues 751–767 (ARHAHAPRRLPHSHARR) are compositionally biased toward basic residues.

It belongs to the GlnD family. It depends on Mg(2+) as a cofactor.

The catalysed reaction is [protein-PII]-L-tyrosine + UTP = [protein-PII]-uridylyl-L-tyrosine + diphosphate. It carries out the reaction [protein-PII]-uridylyl-L-tyrosine + H2O = [protein-PII]-L-tyrosine + UMP + H(+). With respect to regulation, uridylyltransferase (UTase) activity is inhibited by glutamine, while glutamine activates uridylyl-removing (UR) activity. Modifies, by uridylylation and deuridylylation, the PII regulatory proteins (GlnB and homologs), in response to the nitrogen status of the cell that GlnD senses through the glutamine level. Under low glutamine levels, catalyzes the conversion of the PII proteins and UTP to PII-UMP and PPi, while under higher glutamine levels, GlnD hydrolyzes PII-UMP to PII and UMP (deuridylylation). Thus, controls uridylylation state and activity of the PII proteins, and plays an important role in the regulation of nitrogen assimilation and metabolism. The protein is Bifunctional uridylyltransferase/uridylyl-removing enzyme of Bordetella parapertussis (strain 12822 / ATCC BAA-587 / NCTC 13253).